Consider the following 259-residue polypeptide: Type III pantothenate kinase (259 aa).

6–13 (DVGNTNIV) lines the ATP pocket. Substrate contacts are provided by residues Y100 and 107–110 (GADR). The active-site Proton acceptor is the D109. D129 is a binding site for K(+). T132 serves as a coordination point for ATP. T184 serves as a coordination point for substrate.

It belongs to the type III pantothenate kinase family. As to quaternary structure, homodimer. NH4(+) serves as cofactor. It depends on K(+) as a cofactor.

It localises to the cytoplasm. The enzyme catalyses (R)-pantothenate + ATP = (R)-4'-phosphopantothenate + ADP + H(+). Its pathway is cofactor biosynthesis; coenzyme A biosynthesis; CoA from (R)-pantothenate: step 1/5. Catalyzes the phosphorylation of pantothenate (Pan), the first step in CoA biosynthesis. The chain is Type III pantothenate kinase from Clostridium perfringens (strain 13 / Type A).